The primary structure comprises 400 residues: Ubiquitin-like modifier-activating enzyme 5 (400 aa).

Residues Gly-76, Asp-97, Lys-120, Asn-143, and Asn-177 each contribute to the ATP site. Zn(2+)-binding residues include Cys-219 and Cys-222. The active-site Glycyl thioester intermediate is Cys-243. 2 residues coordinate Zn(2+): Cys-296 and Cys-301.

This sequence belongs to the ubiquitin-activating E1 family. UBA5 subfamily.

In terms of biological role, E1-like enzyme which activates UFM1. This is Ubiquitin-like modifier-activating enzyme 5 from Drosophila virilis (Fruit fly).